Reading from the N-terminus, the 342-residue chain is Ribosomal RNA small subunit methyltransferase H (342 aa).

Residues G36–H38, D56, F82, D100, and Q107 contribute to the S-adenosyl-L-methionine site. Positions E309–P342 are disordered. Residues F333–P342 are compositionally biased toward polar residues.

Belongs to the methyltransferase superfamily. RsmH family.

The protein resides in the cytoplasm. It catalyses the reaction cytidine(1402) in 16S rRNA + S-adenosyl-L-methionine = N(4)-methylcytidine(1402) in 16S rRNA + S-adenosyl-L-homocysteine + H(+). Specifically methylates the N4 position of cytidine in position 1402 (C1402) of 16S rRNA. This Xanthomonas campestris pv. campestris (strain B100) protein is Ribosomal RNA small subunit methyltransferase H.